The sequence spans 151 residues: Endoribonuclease YbeY (151 aa).

Zn(2+) contacts are provided by H117, H121, and H127.

It belongs to the endoribonuclease YbeY family. The cofactor is Zn(2+).

It is found in the cytoplasm. Functionally, single strand-specific metallo-endoribonuclease involved in late-stage 70S ribosome quality control and in maturation of the 3' terminus of the 16S rRNA. The polypeptide is Endoribonuclease YbeY (Alkaliphilus oremlandii (strain OhILAs) (Clostridium oremlandii (strain OhILAs))).